A 232-amino-acid polypeptide reads, in one-letter code: 7-cyano-7-deazaguanine synthase (232 aa).

8-18 (FSGGQDSTTCL) contacts ATP. C187, C196, C199, and C202 together coordinate Zn(2+).

The protein belongs to the QueC family. The cofactor is Zn(2+).

The catalysed reaction is 7-carboxy-7-deazaguanine + NH4(+) + ATP = 7-cyano-7-deazaguanine + ADP + phosphate + H2O + H(+). The protein operates within purine metabolism; 7-cyano-7-deazaguanine biosynthesis. Catalyzes the ATP-dependent conversion of 7-carboxy-7-deazaguanine (CDG) to 7-cyano-7-deazaguanine (preQ(0)). The chain is 7-cyano-7-deazaguanine synthase from Photobacterium profundum (strain SS9).